Reading from the N-terminus, the 146-residue chain is Hemoglobin subunit beta (146 aa).

Val1 is modified (N-acetylvaline). The Globin domain occupies 2–146 (HLTAEEKSLV…VANALAHKYH (145 aa)). Residue Ser44 is modified to Phosphoserine. An N6-acetyllysine modification is found at Lys59. His63 provides a ligand contact to heme b. An N6-acetyllysine modification is found at Lys82. His92 provides a ligand contact to heme b. Cys93 is modified (S-nitrosocysteine). N6-acetyllysine is present on Lys144.

It belongs to the globin family. Heterotetramer of two alpha chains and two beta chains. In terms of tissue distribution, red blood cells.

Its function is as follows. Involved in oxygen transport from the lung to the various peripheral tissues. The polypeptide is Hemoglobin subunit beta (HBB) (Canis latrans (Coyote)).